The following is a 199-amino-acid chain: NAD(P)H dehydrogenase (quinone) (199 aa).

One can recognise a Flavodoxin-like domain in the interval 4-190; sequence VLVLYYSAYG…AGARYQGRRV (187 aa). FMN is bound by residues 10 to 15 and 78 to 80; these read SAYGHI and TRF. Y12 serves as a coordination point for NAD(+). W98 is a binding site for substrate. FMN-binding positions include 113 to 119 and H134; that span reads STATQHG.

Belongs to the WrbA family. FMN serves as cofactor.

The enzyme catalyses a quinone + NADH + H(+) = a quinol + NAD(+). It catalyses the reaction a quinone + NADPH + H(+) = a quinol + NADP(+). In Methylocella silvestris (strain DSM 15510 / CIP 108128 / LMG 27833 / NCIMB 13906 / BL2), this protein is NAD(P)H dehydrogenase (quinone).